Consider the following 808-residue polypeptide: Genome polyprotein (808 aa).

Positions 34-55 are disordered; that stretch reads TAEVGSHQPEPLKTSVDKPGSK. 2 short sequence motifs ((L)YPX(n)L motif) span residues 146–150 and 179–184; these read YPHGL and YPVWEL.

It belongs to the picornaviridae polyprotein family. As to quaternary structure, homopentamer. Homooligomer. Interacts with capsid protein VP2. Interacts with capsid protein VP3. In terms of assembly, interacts with capsid protein VP1. Interacts with capsid protein VP3. As to quaternary structure, interacts with capsid protein VP1. Interacts with capsid protein VP2. Specific enzymatic cleavages by viral protease in vivo yield a variety of precursors and mature proteins. Polyprotein processing intermediates are produced, such as P1-2A which is a functional precursor of the structural proteins, VP0 which is a VP4-VP2 precursor, VP1-2A precursor, 3ABC precursor which is a stable and catalytically active precursor of 3A, 3B and 3C proteins, 3AB and 3CD precursors. The assembly signal 2A is removed from VP1-2A by a host protease, possibly host Cathepsin L. This cleavage occurs over a region of 3 amino-acids probably generating VP1 proteins with heterogeneous C-termini. Post-translationally, during virion maturation, immature virions are rendered infectious following cleavage of VP0 into VP4 and VP2. This maturation seems to be an autocatalytic event triggered by the presence of RNA in the capsid and is followed by a conformational change of the particle. In terms of processing, the assembly signal 2A is removed from VP1-2A by a host protease, possibly host Cathepsin L in naked virions. This cleavage does not occur in enveloped virions. This cleavage occurs over a region of 3 amino-acids probably generating VP1 proteins with heterogeneous C-termini. Unlike other picornaviruses, does not seem to be myristoylated.

It is found in the virion. Its subcellular location is the host endosome. It localises to the host multivesicular body. In terms of biological role, capsid proteins VP1, VP2, and VP3 form a closed capsid enclosing the viral positive strand RNA genome. All these proteins contain a beta-sheet structure called beta-barrel jelly roll. Together they form an icosahedral capsid (T=3) composed of 60 copies of each VP1, VP2, and VP3, with a diameter of approximately 300 Angstroms. VP1 is situated at the 12 fivefold axes, whereas VP2 and VP3 are located at the quasi-sixfold axes. The naked capsid interacts with the host receptor HAVCR1 to provide virion attachment to and probably entry into the target cell. Its function is as follows. VP0 precursor is a component of the immature procapsids. Functionally, plays a role in the assembly of the 12 pentamers into an icosahedral structure. Has not been detected in mature virions, supposedly owing to its small size. Precursor component of immature procapsids that corresponds to an extended form of the structural protein VP1. After maturation, possibly by the host Cathepsin L, the assembly signal 2A is cleaved to give rise to the mature VP1 protein. This Human hepatitis A virus genotype IIIA (isolate GA76) (HHAV) protein is Genome polyprotein.